The chain runs to 317 residues: MTDKLTSLRQYTTVVADTGDIAAMKLYQPQDATTNPSLILNAAQIPEYRKLIDDAVAWAKQQSNDRAQQIVDATDKLAVNIGLEILKLVPGRISTEVDARLSYDTEASIAKAKRLIKLYNDAGISNDRILIKLASTWQGIRAAEQLEKEGINCNLTLLFSFAQARACAEAGVFLISPFVGRILDWYKANTDKKEYAPAEDPGVVSVSEIYQYYKEHGYETVVMGASFRNIGEILELAGCDRLTIAPALLKELAESEGAIERKLSYTGEVKARPARITESEFLWQHNQDPMAVDKLAEGIRKFAIDQEKLEKMIGDLL.

Lys-132 acts as the Schiff-base intermediate with substrate in catalysis.

Belongs to the transaldolase family. Type 1 subfamily. As to quaternary structure, homodimer.

It localises to the cytoplasm. The catalysed reaction is D-sedoheptulose 7-phosphate + D-glyceraldehyde 3-phosphate = D-erythrose 4-phosphate + beta-D-fructose 6-phosphate. It participates in carbohydrate degradation; pentose phosphate pathway; D-glyceraldehyde 3-phosphate and beta-D-fructose 6-phosphate from D-ribose 5-phosphate and D-xylulose 5-phosphate (non-oxidative stage): step 2/3. Its function is as follows. Transaldolase is important for the balance of metabolites in the pentose-phosphate pathway. This chain is Transaldolase 1, found in Shigella sonnei (strain Ss046).